The primary structure comprises 410 residues: Histidine--tRNA ligase (410 aa).

The protein belongs to the class-II aminoacyl-tRNA synthetase family.

It is found in the cytoplasm. It catalyses the reaction tRNA(His) + L-histidine + ATP = L-histidyl-tRNA(His) + AMP + diphosphate + H(+). The polypeptide is Histidine--tRNA ligase (Methanocorpusculum labreanum (strain ATCC 43576 / DSM 4855 / Z)).